Reading from the N-terminus, the 143-residue chain is MNSFALLLVCIQACLVQSVFSQCTSRAAVAADRGIIGGYGLGAPCGLGYGLEAPYGWAGYADYGYPAGAYGIDAYGGIGEGNVAVAGELPVAGTTAVAGQVPIMGAVKFGGDVCAAGSVSIAGKCACGCXEGYGYGLGSPYLY.

An N-terminal signal peptide occupies residues 1 to 21; it reads MNSFALLLVCIQACLVQSVFS.

It belongs to the chorion protein family.

In terms of biological role, this protein is one of many from the eggshell of the gypsy moth. This chain is Chorion class A protein Ld5, found in Lymantria dispar (Gypsy moth).